Reading from the N-terminus, the 449-residue chain is uncharacterized protein (449 aa).

The span at 1–11 shows a compositional bias: acidic residues; that stretch reads MLDAPEQDPVD. The interval 1-33 is disordered; sequence MLDAPEQDPVDPGDPASPPHGEAEQPLPGPRWP. Residues 45–65 traverse the membrane as a helical segment; that stretch reads LLLTALGGLLIAGLVTAIPAV. A disordered region spans residues 349–449; the sequence is QPPVPPPDIP…PGPAEPAPAG (101 aa). Residues 365–387 show a composition bias toward pro residues; it reads PPIPLQLPTPRPAPPAQQLPSTP. Positions 409–418 are enriched in low complexity; the sequence is HAPASAAPAE. A compositionally biased stretch (pro residues) spans 437–449; it reads ATPPGPAEPAPAG.

The protein localises to the cell membrane. It is found in the secreted. Its function is as follows. May play a role in septum formation. This is an uncharacterized protein from Mycobacterium tuberculosis (strain CDC 1551 / Oshkosh).